Here is a 276-residue protein sequence, read N- to C-terminus: MQNKFSLPTQDEIVKRLKKIPEGLWRECSNCHEKFYYRRAGVYEVCPNCGYGARLGSRKRIKLLCDEFEEWDKAMATDPTNIDDEKYKKKLATGIKTTHVNESVLTGKAKIGNNEFAIGVMDSRFIMGSLGQVTGSKIARMFQEATRQHLPVIMFTASGGARMQDGIHSLMQMARVSDEVARHSAEGLLYIAVITDPTTGGVTASYAMQADIIISEPKTLIGFAGRRVIEQTINQKPPKDFQQAETLLKNGFLDDIVERPNLKEYLNNLLNLHSDK.

One can recognise a CoA carboxyltransferase N-terminal domain in the interval 24–276 (LWRECSNCHE…NNLLNLHSDK (253 aa)). Positions 28, 31, 46, and 49 each coordinate Zn(2+). The segment at 28 to 49 (CSNCHEKFYYRRAGVYEVCPNC) adopts a C4-type zinc-finger fold.

This sequence belongs to the AccD/PCCB family. Acetyl-CoA carboxylase is a heterohexamer composed of biotin carboxyl carrier protein (AccB), biotin carboxylase (AccC) and two subunits each of ACCase subunit alpha (AccA) and ACCase subunit beta (AccD). Zn(2+) is required as a cofactor.

It is found in the cytoplasm. The catalysed reaction is N(6)-carboxybiotinyl-L-lysyl-[protein] + acetyl-CoA = N(6)-biotinyl-L-lysyl-[protein] + malonyl-CoA. Its pathway is lipid metabolism; malonyl-CoA biosynthesis; malonyl-CoA from acetyl-CoA: step 1/1. In terms of biological role, component of the acetyl coenzyme A carboxylase (ACC) complex. Biotin carboxylase (BC) catalyzes the carboxylation of biotin on its carrier protein (BCCP) and then the CO(2) group is transferred by the transcarboxylase to acetyl-CoA to form malonyl-CoA. This chain is Acetyl-coenzyme A carboxylase carboxyl transferase subunit beta, found in Pediococcus pentosaceus (strain ATCC 25745 / CCUG 21536 / LMG 10740 / 183-1w).